The sequence spans 250 residues: Small ribosomal subunit protein uS3 (250 aa).

The KH type-2 domain occupies 39–107; it reads VREFLTKNLK…PAQVSINEID (69 aa). Positions 215–250 are disordered; sequence MNPAPAEERPAKRGRGRGEGQERRGRRGDRAADKGE. Basic and acidic residues predominate over residues 220-250; that stretch reads AEERPAKRGRGRGEGQERRGRRGDRAADKGE.

The protein belongs to the universal ribosomal protein uS3 family. Part of the 30S ribosomal subunit. Forms a tight complex with proteins S10 and S14.

Its function is as follows. Binds the lower part of the 30S subunit head. Binds mRNA in the 70S ribosome, positioning it for translation. The sequence is that of Small ribosomal subunit protein uS3 from Acinetobacter baumannii (strain AB0057).